Consider the following 111-residue polypeptide: Cell division topological specificity factor (111 aa).

It belongs to the MinE family.

In terms of biological role, prevents the cell division inhibition by proteins MinC and MinD at internal division sites while permitting inhibition at polar sites. This ensures cell division at the proper site by restricting the formation of a division septum at the midpoint of the long axis of the cell. The sequence is that of Cell division topological specificity factor from Prochlorococcus marinus (strain MIT 9312).